A 303-amino-acid polypeptide reads, in one-letter code: Probable alpha-L-glutamate ligase 1 (303 aa).

In terms of domain architecture, ATP-grasp spans 104–287 (LQLLSRKGVG…IAGLIYSFIE (184 aa)). ATP-binding positions include K141, 178-179 (EF), D187, and 211-213 (RSN). Mg(2+)-binding residues include D248, E260, and N262. D248, E260, and N262 together coordinate Mn(2+).

The protein belongs to the RimK family. Requires Mg(2+) as cofactor. Mn(2+) serves as cofactor.

This is Probable alpha-L-glutamate ligase 1 from Hahella chejuensis (strain KCTC 2396).